The chain runs to 293 residues: Acidic endochitinase SE2 (293 aa).

Residues M1–G25 form the signal peptide. One can recognise a GH18 domain in the interval S26–V293. Disulfide bonds link C45/C91 and C75/C81. E151 (proton donor) is an active-site residue. Residues C183 and C212 are joined by a disulfide bond.

The protein belongs to the glycosyl hydrolase 18 family. Chitinase class II subfamily. Accumulates in leaves during infection.

Its subcellular location is the secreted. It localises to the extracellular space. It catalyses the reaction Random endo-hydrolysis of N-acetyl-beta-D-glucosaminide (1-&gt;4)-beta-linkages in chitin and chitodextrins.. Functionally, this protein functions as a defense against chitin containing fungal pathogens. This endochitinase also exhibits exochitinase activity, i.e. it is capable of hydrolyzing chito-oligosaccharides, including chitobiose. The polypeptide is Acidic endochitinase SE2 (SE2) (Beta vulgaris (Sugar beet)).